The sequence spans 1705 residues: Receptor-type tyrosine-protein phosphatase V (1705 aa).

The signal sequence occupies residues 1–18; that stretch reads MRPLILLAALLWLQDSLA. Residues 19–1077 are Extracellular-facing; it reads QEDVCSSLDG…QASISLVAMP (1059 aa). Residues 24–44 form a disordered region; the sequence is SSLDGSPDRQGGGPPLSVSVT. 10 Fibronectin type-III domains span residues 37 to 129, 130 to 222, 218 to 305, 306 to 388, 393 to 454, 475 to 569, 565 to 654, 655 to 749, 744 to 831, and 832 to 926; these read PPLS…TAPT, VVRG…VPPD, PVPP…EWTY, PSYP…SIWL, ARPM…HYRV, PPQS…APPT, PAPP…TGWT, PPSA…TPNE, PLTP…VLSV, and EPGP…SAEV. N74, N89, N117, N174, N239, N259, N299, N345, N431, N551, N570, N620, N649, N663, and N737 each carry an N-linked (GlcNAc...) asparagine glycan. N-linked (GlcNAc...) asparagine glycosylation is found at N851, N882, N970, and N982. Residues 1078 to 1100 form a helical membrane-spanning segment; that stretch reads LTVMMGTVVGCIIIVCAVLCLLC. Residues 1101 to 1705 are Cytoplasmic-facing; sequence RRGLKGPRSE…LRNRLPRARK (605 aa). 2 consecutive Tyrosine-protein phosphatase domains span residues 1150-1409 and 1427-1695; these read FFQE…LLNK and NFAQ…LNSA. Substrate-binding positions include D1316, 1350 to 1356, and Q1394; that span reads CSAGVGR. The active-site Phosphocysteine intermediate is C1350.

The protein belongs to the protein-tyrosine phosphatase family. Receptor class 3 subfamily.

It is found in the membrane. It catalyses the reaction O-phospho-L-tyrosyl-[protein] + H2O = L-tyrosyl-[protein] + phosphate. Functionally, protein tyrosine phosphatase that acts as a regulator of energy metabolism by mediating dephosphorylation of insulin receptor (Insr). Prevents decarboxylation of osteocalcin (Bglap and Bglap2) via an indirect mechanism: dephosphorylation of insulin receptor prevents insulin signaling-dependent decarboxylation of osteocalcin, preventing the hormone activity of osteocalcin. May play a role in the maintenance of pluripotency. The protein is Receptor-type tyrosine-protein phosphatase V (Ptprv) of Mus musculus (Mouse).